The sequence spans 1214 residues: Neuronal cell adhesion molecule (1214 aa).

The N-terminal stretch at 1–29 (MQLKTMPKKKPLSAGRAPLFLFLCQMISA) is a signal peptide. The Extracellular segment spans residues 30–1077 (LDVPLDPKLL…ASRQVDIATQ (1048 aa)). Ig-like C2-type domains follow at residues 46 to 134 (PTIT…AAVS) and 141 to 235 (PSRS…QPIS). Intrachain disulfides connect Cys-68/Cys-123 and Cys-167/Cys-218. Asn-83 carries N-linked (GlcNAc...) asparagine glycosylation. N-linked (GlcNAc...) asparagine glycans are attached at residues Asn-223, Asn-245, Asn-251, Asn-276, Asn-314, and Asn-377. 4 consecutive Ig-like C2-type domains span residues 267–356 (PPTF…ISVT), 361–448 (PYWI…AFVN), 454–541 (PRIL…VHLE), and 545–626 (PTRF…DSVS). Cys-292 and Cys-340 form a disulfide bridge. Cys-382 and Cys-432 are joined by a disulfide. N-linked (GlcNAc...) asparagine glycosylation is found at Asn-433 and Asn-507. 2 cysteine pairs are disulfide-bonded: Cys-476/Cys-525 and Cys-567/Cys-616. Residues Asn-619, Asn-716, Asn-802, Asn-858, Asn-993, Asn-1009, and Asn-1019 are each glycosylated (N-linked (GlcNAc...) asparagine). 4 consecutive Fibronectin type-III domains span residues 649–744 (PPFD…TKAA), 746–843 (PDQN…SGED), 848–950 (APGN…TPEG), and 954–1051 (APSS…VDEG). The chain crosses the membrane as a helical span at residues 1078–1100 (GWFIGLMCAVALLILILLIVCFI). Residues 1101-1214 (RRNKGGKYPV…SPVNAMNSFV (114 aa)) lie on the Cytoplasmic side of the membrane. Positions 1109 to 1129 (PVKEKEDAHADPEIQPMKEDD) are enriched in basic and acidic residues. Residues 1109–1214 (PVKEKEDAHA…SPVNAMNSFV (106 aa)) form a disordered region. Residue Thr-1131 is modified to Phosphothreonine. Tyr-1135 is modified (phosphotyrosine). Ser-1136 is subject to Phosphoserine. Basic and acidic residues predominate over residues 1151–1160 (PSDRTVKKED). Phosphoserine occurs at positions 1161, 1164, 1181, 1200, 1201, and 1205. Positions 1198–1214 (NESSEAPSPVNAMNSFV) are enriched in polar residues.

This sequence belongs to the immunoglobulin superfamily. L1/neurofascin/NgCAM family. Constituent of a NFASC/NRCAM/ankyrin-G complex. Detected in a complex with CNTN1 and PTPRB. Interacts with MYOC. Interacts with GLDN. In terms of tissue distribution, detected in cerebellum Purkinje cells. Detected on nodes of Ranvier and unmyelinated axons in sciatic nerve (at protein level).

It is found in the cell membrane. The protein resides in the cell projection. The protein localises to the axon. Its subcellular location is the secreted. Functionally, cell adhesion protein that is required for normal responses to cell-cell contacts in brain and in the peripheral nervous system. Plays a role in neurite outgrowth in response to contactin binding. Plays a role in mediating cell-cell contacts between Schwann cells and axons. Plays a role in the formation and maintenance of the nodes of Ranvier on myelinated axons. Nodes of Ranvier contain clustered sodium channels that are crucial for the saltatory propagation of action potentials along myelinated axons. During development, nodes of Ranvier are formed by the fusion of two heminodes. Required for normal clustering of sodium channels at heminodes; not required for the formation of mature nodes with normal sodium channel clusters. Required, together with GLDN, for maintaining NFASC and sodium channel clusters at mature nodes of Ranvier. The chain is Neuronal cell adhesion molecule (Nrcam) from Rattus norvegicus (Rat).